A 235-amino-acid polypeptide reads, in one-letter code: Pyridoxine 5'-phosphate synthase (235 aa).

3-amino-2-oxopropyl phosphate is bound at residue Asn6. 8 to 9 (DH) serves as a coordination point for 1-deoxy-D-xylulose 5-phosphate. Arg17 provides a ligand contact to 3-amino-2-oxopropyl phosphate. His42 functions as the Proton acceptor in the catalytic mechanism. Arg44 and His49 together coordinate 1-deoxy-D-xylulose 5-phosphate. Catalysis depends on Glu69, which acts as the Proton acceptor. 1-deoxy-D-xylulose 5-phosphate is bound at residue Thr99. The active-site Proton donor is His188. Residues Gly189 and 210 to 211 (GH) contribute to the 3-amino-2-oxopropyl phosphate site.

It belongs to the PNP synthase family. In terms of assembly, homooctamer; tetramer of dimers.

The protein resides in the cytoplasm. It carries out the reaction 3-amino-2-oxopropyl phosphate + 1-deoxy-D-xylulose 5-phosphate = pyridoxine 5'-phosphate + phosphate + 2 H2O + H(+). It functions in the pathway cofactor biosynthesis; pyridoxine 5'-phosphate biosynthesis; pyridoxine 5'-phosphate from D-erythrose 4-phosphate: step 5/5. Its function is as follows. Catalyzes the complicated ring closure reaction between the two acyclic compounds 1-deoxy-D-xylulose-5-phosphate (DXP) and 3-amino-2-oxopropyl phosphate (1-amino-acetone-3-phosphate or AAP) to form pyridoxine 5'-phosphate (PNP) and inorganic phosphate. The polypeptide is Pyridoxine 5'-phosphate synthase (Wolbachia sp. subsp. Drosophila simulans (strain wRi)).